Here is a 95-residue protein sequence, read N- to C-terminus: Hiracin-JM79 immunity factor (95 aa).

Functionally, imparts immunity to bacteriocin hiracin-JM79 to naturally sensitive host strains. The protein is Hiracin-JM79 immunity factor of Enterococcus hirae.